Reading from the N-terminus, the 131-residue chain is Small ribosomal subunit protein uS11 (131 aa).

Belongs to the universal ribosomal protein uS11 family. As to quaternary structure, part of the 30S ribosomal subunit. Interacts with proteins S7 and S18. Binds to IF-3. Interacts with VmlR. Interacts with BrxC.

In terms of biological role, located on the platform of the 30S subunit, it bridges several disparate RNA helices of the 16S rRNA. Forms part of the Shine-Dalgarno cleft in the 70S ribosome. This Bacillus subtilis (strain 168) protein is Small ribosomal subunit protein uS11.